The primary structure comprises 293 residues: Undecaprenyl-diphosphatase (293 aa).

6 helical membrane-spanning segments follow: residues 74–94 (VLVF…AGVF), 107–127 (WMII…KDLI), 134–154 (MWIT…AEKM), 209–229 (FLLA…DAFA), 243–263 (VGTL…MKFV), and 271–291 (FAAY…LGML).

Belongs to the UppP family.

The protein localises to the cell membrane. It carries out the reaction di-trans,octa-cis-undecaprenyl diphosphate + H2O = di-trans,octa-cis-undecaprenyl phosphate + phosphate + H(+). In terms of biological role, catalyzes the dephosphorylation of undecaprenyl diphosphate (UPP). Confers resistance to bacitracin. The chain is Undecaprenyl-diphosphatase from Corynebacterium glutamicum (strain ATCC 13032 / DSM 20300 / JCM 1318 / BCRC 11384 / CCUG 27702 / LMG 3730 / NBRC 12168 / NCIMB 10025 / NRRL B-2784 / 534).